Here is a 96-residue protein sequence, read N- to C-terminus: Putative pterin-4-alpha-carbinolamine dehydratase (96 aa).

This sequence belongs to the pterin-4-alpha-carbinolamine dehydratase family.

It carries out the reaction (4aS,6R)-4a-hydroxy-L-erythro-5,6,7,8-tetrahydrobiopterin = (6R)-L-erythro-6,7-dihydrobiopterin + H2O. The sequence is that of Putative pterin-4-alpha-carbinolamine dehydratase from Prochlorococcus marinus (strain MIT 9303).